The primary structure comprises 513 residues: Cytochrome P450 1A2 (513 aa).

The O-linked (GlcNAc) serine glycan is linked to Ser68. Cys456 is a binding site for heme.

This sequence belongs to the cytochrome P450 family. As to quaternary structure, interacts with PGRMC1; the interaction requires PGRMC1 homodimerization. Requires heme as cofactor.

The protein resides in the endoplasmic reticulum membrane. It localises to the microsome membrane. The catalysed reaction is an organic molecule + reduced [NADPH--hemoprotein reductase] + O2 = an alcohol + oxidized [NADPH--hemoprotein reductase] + H2O + H(+). The enzyme catalyses 17beta-estradiol + reduced [NADPH--hemoprotein reductase] + O2 = 2-hydroxy-17beta-estradiol + oxidized [NADPH--hemoprotein reductase] + H2O + H(+). It carries out the reaction 17beta-estradiol + reduced [NADPH--hemoprotein reductase] + O2 = 4-hydroxy-17beta-estradiol + oxidized [NADPH--hemoprotein reductase] + H2O + H(+). It catalyses the reaction estrone + reduced [NADPH--hemoprotein reductase] + O2 = 2-hydroxyestrone + oxidized [NADPH--hemoprotein reductase] + H2O + H(+). The catalysed reaction is estrone + reduced [NADPH--hemoprotein reductase] + O2 = 4-hydroxyestrone + oxidized [NADPH--hemoprotein reductase] + H2O + H(+). The enzyme catalyses cholesterol + reduced [NADPH--hemoprotein reductase] + O2 = 25-hydroxycholesterol + oxidized [NADPH--hemoprotein reductase] + H2O + H(+). It carries out the reaction all-trans-retinol + reduced [NADPH--hemoprotein reductase] + O2 = all-trans-retinal + oxidized [NADPH--hemoprotein reductase] + 2 H2O + H(+). It catalyses the reaction all-trans-retinal + reduced [NADPH--hemoprotein reductase] + O2 = all-trans-retinoate + oxidized [NADPH--hemoprotein reductase] + H2O + 2 H(+). The catalysed reaction is (5Z,8Z,11Z,14Z)-eicosatetraenoate + reduced [NADPH--hemoprotein reductase] + O2 = (14R,15S)-epoxy-(5Z,8Z,11Z)-eicosatrienoate + oxidized [NADPH--hemoprotein reductase] + H2O + H(+). The enzyme catalyses (5Z,8Z,11Z,14Z)-eicosatetraenoate + reduced [NADPH--hemoprotein reductase] + O2 = (14S,15R)-epoxy-(5Z,8Z,11Z)-eicosatrienoate + oxidized [NADPH--hemoprotein reductase] + H2O + H(+). It carries out the reaction (5Z,8Z,11Z,14Z,17Z)-eicosapentaenoate + reduced [NADPH--hemoprotein reductase] + O2 = (17R,18S)-epoxy-(5Z,8Z,11Z,14Z)-eicosatetraenoate + oxidized [NADPH--hemoprotein reductase] + H2O + H(+). It catalyses the reaction (4Z,7Z,10Z,13Z,16Z,19Z)-docosahexaenoate + reduced [NADPH--hemoprotein reductase] + O2 = (19R,20S)-epoxy-(4Z,7Z,10Z,13Z,16Z)-docosapentaenoate + oxidized [NADPH--hemoprotein reductase] + H2O + H(+). The catalysed reaction is (5S)-hydroperoxy-(6E,8Z,11Z,14Z)-eicosatetraenoate = 5-oxo-(6E,8Z,11Z,14Z)-eicosatetraenoate + H2O. The enzyme catalyses (12S)-hydroperoxy-(5Z,8Z,10E,14Z)-eicosatetraenoate = 12-oxo-(5Z,8Z,10E,14Z)-eicosatetraenoate + H2O. It carries out the reaction (15S)-hydroperoxy-(5Z,8Z,11Z,13E)-eicosatetraenoate = 15-oxo-(5Z,8Z,11Z,13E)-eicosatetraenoate + H2O. It catalyses the reaction (13S)-hydroperoxy-(9Z,11E)-octadecadienoate = 13-oxo-(9Z,11E)-octadecadienoate + H2O. The catalysed reaction is (5Z,8Z,11Z,14Z)-eicosatetraenoate + reduced [NADPH--hemoprotein reductase] + O2 = 13-hydroxy-(5Z,8Z,11Z,14Z)-eicosatetraenoate + oxidized [NADPH--hemoprotein reductase] + H2O + H(+). The enzyme catalyses (5Z,8Z,11Z,14Z)-eicosatetraenoate + reduced [NADPH--hemoprotein reductase] + O2 = 19-hydroxy-(5Z,8Z,11Z,14Z)-eicosatetraenoate + oxidized [NADPH--hemoprotein reductase] + H2O + H(+). It carries out the reaction (9Z,12Z)-octadecadienoate + reduced [NADPH--hemoprotein reductase] + O2 = 11-hydroxy-(9Z,12Z)-octadecadienoate + oxidized [NADPH--hemoprotein reductase] + H2O + H(+). It functions in the pathway cofactor metabolism; retinol metabolism. It participates in steroid metabolism; cholesterol metabolism. Its pathway is lipid metabolism; arachidonate metabolism. In terms of biological role, a cytochrome P450 monooxygenase involved in the metabolism of various endogenous substrates, including fatty acids, steroid hormones and vitamins. Mechanistically, uses molecular oxygen inserting one oxygen atom into a substrate, and reducing the second into a water molecule, with two electrons provided by NADPH via cytochrome P450 reductase (NADPH--hemoprotein reductase). Catalyzes the hydroxylation of carbon-hydrogen bonds. Exhibits high catalytic activity for the formation of hydroxyestrogens from estrone (E1) and 17beta-estradiol (E2), namely 2-hydroxy E1 and E2. Metabolizes cholesterol toward 25-hydroxycholesterol, a physiological regulator of cellular cholesterol homeostasis. May act as a major enzyme for all-trans retinoic acid biosynthesis in the liver. Catalyzes two successive oxidative transformation of all-trans retinol to all-trans retinal and then to the active form all-trans retinoic acid. Primarily catalyzes stereoselective epoxidation of the last double bond of polyunsaturated fatty acids (PUFA), displaying a strong preference for the (R,S) stereoisomer. Catalyzes bisallylic hydroxylation and omega-1 hydroxylation of PUFA. May also participate in eicosanoids metabolism by converting hydroperoxide species into oxo metabolites (lipoxygenase-like reaction, NADPH-independent). Plays a role in the oxidative metabolism of xenobiotics. Catalyzes the N-hydroxylation of heterocyclic amines and the O-deethylation of phenacetin. Metabolizes caffeine via N3-demethylation. The polypeptide is Cytochrome P450 1A2 (Cyp1a2) (Rattus norvegicus (Rat)).